We begin with the raw amino-acid sequence, 459 residues long: ATP synthase subunit beta (459 aa).

Residue 147–154 (GGAGVGKT) participates in ATP binding.

Belongs to the ATPase alpha/beta chains family. F-type ATPases have 2 components, CF(1) - the catalytic core - and CF(0) - the membrane proton channel. CF(1) has five subunits: alpha(3), beta(3), gamma(1), delta(1), epsilon(1). CF(0) has three main subunits: a(1), b(2) and c(9-12). The alpha and beta chains form an alternating ring which encloses part of the gamma chain. CF(1) is attached to CF(0) by a central stalk formed by the gamma and epsilon chains, while a peripheral stalk is formed by the delta and b chains.

It localises to the cell inner membrane. It catalyses the reaction ATP + H2O + 4 H(+)(in) = ADP + phosphate + 5 H(+)(out). Functionally, produces ATP from ADP in the presence of a proton gradient across the membrane. The catalytic sites are hosted primarily by the beta subunits. The polypeptide is ATP synthase subunit beta (Hydrogenovibrio crunogenus (strain DSM 25203 / XCL-2) (Thiomicrospira crunogena)).